The chain runs to 171 residues: S-ribosylhomocysteine lyase (171 aa).

Fe cation is bound by residues His-54, His-58, and Cys-128.

The protein belongs to the LuxS family. In terms of assembly, homodimer. The cofactor is Fe cation.

It carries out the reaction S-(5-deoxy-D-ribos-5-yl)-L-homocysteine = (S)-4,5-dihydroxypentane-2,3-dione + L-homocysteine. In terms of biological role, involved in the synthesis of autoinducer 2 (AI-2) which is secreted by bacteria and is used to communicate both the cell density and the metabolic potential of the environment. The regulation of gene expression in response to changes in cell density is called quorum sensing. Catalyzes the transformation of S-ribosylhomocysteine (RHC) to homocysteine (HC) and 4,5-dihydroxy-2,3-pentadione (DPD). The protein is S-ribosylhomocysteine lyase of Escherichia fergusonii (strain ATCC 35469 / DSM 13698 / CCUG 18766 / IAM 14443 / JCM 21226 / LMG 7866 / NBRC 102419 / NCTC 12128 / CDC 0568-73).